Consider the following 337-residue polypeptide: Ferrochelatase (337 aa).

Residues H189 and E293 each coordinate Fe cation.

The protein belongs to the ferrochelatase family.

The protein resides in the cytoplasm. It catalyses the reaction heme b + 2 H(+) = protoporphyrin IX + Fe(2+). It functions in the pathway porphyrin-containing compound metabolism; protoheme biosynthesis; protoheme from protoporphyrin-IX: step 1/1. Catalyzes the ferrous insertion into protoporphyrin IX. The protein is Ferrochelatase of Pseudomonas putida (strain W619).